The chain runs to 211 residues: Arginine exporter protein ArgO (211 aa).

6 consecutive transmembrane segments (helical) span residues 1 to 21 (MISYYFQGFALGAAMILPLGP), 37 to 57 (LMIALLCALSDLVLISAGIFG), 68 to 88 (LLALVTWGGVAFLLWYGLGAL), 111 to 131 (IIATMLAVTWLNPHVYLDTFV), 147 to 167 (WFALGTISASFLWFFGLALLA), and 179 to 199 (AQRIINILVGVVMWLIAFQLA).

It belongs to the LysE/ArgO transporter (TC 2.A.75) family.

The protein localises to the cell inner membrane. The catalysed reaction is L-arginine(in) = L-arginine(out). Functionally, involved in the export of arginine. Important to control the intracellular level of arginine and the correct balance between arginine and lysine. The protein is Arginine exporter protein ArgO of Salmonella enteritidis PT4 (strain P125109).